A 165-amino-acid polypeptide reads, in one-letter code: uncharacterized protein (165 aa).

This is an uncharacterized protein from Acanthamoeba polyphaga mimivirus (APMV).